A 199-amino-acid chain; its full sequence is Translation machinery-associated protein 22 (199 aa).

An SUI1 domain is found at 97–168; that stretch reads VVIRREARTK…EVEAYIHALL (72 aa).

This sequence belongs to the DENR family. As to quaternary structure, interacts with the 40S ribosomal subunit.

It localises to the cytoplasm. This chain is Translation machinery-associated protein 22 (TMA22), found in Eremothecium gossypii (strain ATCC 10895 / CBS 109.51 / FGSC 9923 / NRRL Y-1056) (Yeast).